Here is a 449-residue protein sequence, read N- to C-terminus: Heterogeneous nuclear ribonucleoprotein H2 (449 aa).

Met-1 carries the post-translational modification N-acetylmethionine. Position 2 is an N-acetylmethionine; in Heterogeneous nuclear ribonucleoprotein H2, N-terminally processed (Met-2). Residues 11 to 90 enclose the RRM 1 domain; it reads FVVKVRGLPW…RYVEVFKSNS (80 aa). Phosphoserine is present on Ser-23. Residue Lys-35 forms a Glycyl lysine isopeptide (Lys-Gly) (interchain with G-Cter in SUMO2) linkage. Residues Ser-54 and Ser-63 each carry the phosphoserine modification. Residue Lys-87 forms a Glycyl lysine isopeptide (Lys-Gly) (interchain with G-Cter in SUMO2) linkage. Ser-90 bears the Phosphoserine mark. Lys-98 is covalently cross-linked (Glycyl lysine isopeptide (Lys-Gly) (interchain with G-Cter in SUMO2)). The 78-residue stretch at 111-188 folds into the RRM 2 domain; that stretch reads GFVRLRGLPF…RYIEIFKSSR (78 aa). Arg-233 is modified (dimethylated arginine; alternate). Arg-233 is modified (omega-N-methylarginine; alternate). A 1-1 repeat occupies 234–249; it reads GAYGGGYGGYDDYGGY. The tract at residues 234 to 433 is 2 X 16 AA Gly-rich approximate repeats; it reads GAYGGGYGGY…YGGQSSMSGY (200 aa). Phosphotyrosine is present on Tyr-246. The region spanning 289-364 is the RRM 3 domain; sequence HCVHMRGLPY…RYVELFLNST (76 aa). Ser-310 carries the phosphoserine modification. Repeat copies occupy residues 354-372, 374-392, and 418-433. The 2 X 19 AA perfect repeats stretch occupies residues 354–392; it reads HRYVELFLNSTAGTSGGAYDHSYVELFLNSTAGASGGAY.

As to quaternary structure, component of a ribonucleoprotein complex containing mRNAs and RNA-binding proteins including DDX5, HNRNPH2 and SRSF1 as well as splicing regulator ARVCF. Interacts with TXNL4/DIM1.

It localises to the nucleus. Its subcellular location is the nucleoplasm. In terms of biological role, this protein is a component of the heterogeneous nuclear ribonucleoprotein (hnRNP) complexes which provide the substrate for the processing events that pre-mRNAs undergo before becoming functional, translatable mRNAs in the cytoplasm. Binds poly(RG). The sequence is that of Heterogeneous nuclear ribonucleoprotein H2 (Hnrnph2) from Mus musculus (Mouse).